The chain runs to 320 residues: o-succinylbenzoate synthase (320 aa).

Lysine 133 (proton donor) is an active-site residue. Mg(2+)-binding residues include aspartate 161, glutamate 190, and aspartate 213. Lysine 235 acts as the Proton acceptor in catalysis.

Belongs to the mandelate racemase/muconate lactonizing enzyme family. MenC type 1 subfamily. It depends on a divalent metal cation as a cofactor.

The catalysed reaction is (1R,6R)-6-hydroxy-2-succinyl-cyclohexa-2,4-diene-1-carboxylate = 2-succinylbenzoate + H2O. The protein operates within quinol/quinone metabolism; 1,4-dihydroxy-2-naphthoate biosynthesis; 1,4-dihydroxy-2-naphthoate from chorismate: step 4/7. Its pathway is quinol/quinone metabolism; menaquinone biosynthesis. Its function is as follows. Converts 2-succinyl-6-hydroxy-2,4-cyclohexadiene-1-carboxylate (SHCHC) to 2-succinylbenzoate (OSB). The polypeptide is o-succinylbenzoate synthase (Citrobacter koseri (strain ATCC BAA-895 / CDC 4225-83 / SGSC4696)).